Reading from the N-terminus, the 521-residue chain is Probable rhamnogalacturonase B (521 aa).

An N-terminal signal peptide occupies residues 1-21; the sequence is MRLHAFTLLSLLGLVPSFAAA. The cysteines at positions 42 and 68 are disulfide-linked. The N-linked (GlcNAc...) asparagine glycan is linked to asparagine 145. Residue aspartate 219 is the Proton donor of the active site. A disulfide bridge links cysteine 221 with cysteine 238. N-linked (GlcNAc...) asparagine glycosylation occurs at asparagine 239. Histidine 294 is an active-site residue. Asparagine 321 carries an N-linked (GlcNAc...) asparagine glycan. Disulfide bonds link cysteine 344/cysteine 350 and cysteine 372/cysteine 381. The tract at residues 462-521 is disordered; that stretch reads ETPAAASRSEQVVQGAPQETGQSAPESAGPVPSGNPGPVPTGGSRPSRHRHGHHHFGSAI. A compositionally biased stretch (polar residues) spans 469–486; it reads RSEQVVQGAPQETGQSAP. Residues 507 to 521 are compositionally biased toward basic residues; that stretch reads PSRHRHGHHHFGSAI.

This sequence belongs to the glycosyl hydrolase 28 family.

It is found in the secreted. It carries out the reaction Endohydrolysis of alpha-D-GalA-(1-&gt;2)-alpha-L-Rha glycosidic bond in the rhamnogalacturonan I backbone with initial inversion of anomeric configuration releasing oligosaccharides with beta-D-GalA at the reducing end.. Pectinolytic enzymes consist of four classes of enzymes: pectine lyase, polygalacturonase, pectin methylesterase and rhamnogalacturonase. Hydrolyzes alpha-D-galacturonopyranosyl-(1,2)-alpha-L-rhamnopyranosyl linkages in the backbone of the hairy regions of pectins. This is Probable rhamnogalacturonase B (rhgB) from Aspergillus fumigatus (strain CBS 144.89 / FGSC A1163 / CEA10) (Neosartorya fumigata).